A 333-amino-acid chain; its full sequence is MVREKVKVSTRTLQWKCVESRRDSKRLYYGRFILSPLMKGQADTIGIAMRRALLGEMEGTCITRAKSENIPHDYSNIVGIQESVHEILMNLQEIVLRSNLYGTCNALICVQGPGYITARDIILPPSVEIMDNTQHIATLTEPIDLCIGLQIERNRGYSLKMPNPFEDGSYPIDALFMPVQNANHSIHSYGTGNENQEILFLEIWTNGNLTPKEALHEASRNLINLFIPFLHVEEETFYLENNEDKVTLPLFPFHNRLVKLRKKKKELVFQYIFIDQLELPPRIYNCLKKSNIHTLLDLLNNSQEDLIKIEHFHIEDVKKILDILEKNRKFISN.

Residues 1 to 233 (MVREKVKVST…NLFIPFLHVE (233 aa)) form an alpha N-terminal domain (alpha-NTD) region. Residues 267–333 (LVFQYIFIDQ…LEKNRKFISN (67 aa)) are alpha C-terminal domain (alpha-CTD).

It belongs to the RNA polymerase alpha chain family. In plastids the minimal PEP RNA polymerase catalytic core is composed of four subunits: alpha, beta, beta', and beta''. When a (nuclear-encoded) sigma factor is associated with the core the holoenzyme is formed, which can initiate transcription.

Its subcellular location is the plastid. The protein localises to the chloroplast. It catalyses the reaction RNA(n) + a ribonucleoside 5'-triphosphate = RNA(n+1) + diphosphate. Its function is as follows. DNA-dependent RNA polymerase catalyzes the transcription of DNA into RNA using the four ribonucleoside triphosphates as substrates. The sequence is that of DNA-directed RNA polymerase subunit alpha from Aethionema grandiflorum (Persian stone-cress).